A 286-amino-acid polypeptide reads, in one-letter code: MAFPKRLEYGGHALVWSGDWSAAGARKAIAGAARAGYDYIEIALLDPWQIDVALTKDLLQEYNLRAHASLGLSAATDVTSTDPAIVAKGDELLRKATDVLYALGGSELCGVIYCALGKYPGPASRENRANSVAAMQRLADYAADKGINIDLEVVNRYETNIMNTGLEGLAFLDEVNRPNAFLHLDTYHMNIEENGMAKSVLAAGDRLGYVHIGESHRGYLGTGNVDFASFFAALKQIDYRGPITFESFSSEIVDPKLSNTLCVWRNLWHDSDDLAGKALEFIKQRY.

D-allulose contacts are provided by His-12, Ser-69, Glu-152, and Glu-158. D-fructose is bound by residues His-12, Ser-69, Glu-152, and Glu-158. Residue Glu-152 is the Proton donor/acceptor of the active site. Glu-152 lines the Mn(2+) pocket. A Mn(2+)-binding site is contributed by Asp-185. D-allulose is bound by residues His-188, His-211, Arg-217, and Glu-246. D-fructose-binding residues include His-188, His-211, Arg-217, and Glu-246. Mn(2+) is bound at residue His-211. Glu-246 (proton donor/acceptor) is an active-site residue. Glu-246 is a binding site for Mn(2+).

Belongs to the hyi family. In terms of assembly, homodimer. Requires Mn(2+) as cofactor.

The catalysed reaction is L-ribulose = L-xylulose. The enzyme catalyses D-ribulose = D-xylulose. It carries out the reaction D-allulose = keto-D-fructose. It catalyses the reaction keto-L-tagatose = keto-L-sorbose. The catalysed reaction is keto-D-tagatose = keto-D-sorbose. Functionally, catalyzes the epimerization of various ketoses at the C(3) position. Exhibits the highest enzymatic activity toward L-ribulose, followed by D-ribulose, D-allulose and D-fructose. Shows lower activity with L-xylulose, L-tagatose, D-xylulose, D-tagatose, L-sorbose, D-sorbose, and weak activity with L-allulose and L-fructose. The sequence is that of L-ribulose 3-epimerase from Methylomonas sp. (strain DH-1).